The primary structure comprises 143 residues: MFMGEYDHQLDTKGRMIIPSKFRYDLNERFIITRGLDKCLFGYTLDEWQQIEEKMKTLPMTKKDARKFMRMFFSGAVEVELDKQGRINIPQNLRKYANLTKECTVIGVSNRIEIWDRETWNDFYEESEESFEDIAEDLIDFDF.

2 consecutive SpoVT-AbrB domains span residues 5–47 (EYDH…TLDE) and 76–119 (AVEV…DRET).

It belongs to the MraZ family. As to quaternary structure, forms oligomers.

The protein localises to the cytoplasm. It is found in the nucleoid. This Staphylococcus aureus (strain Mu3 / ATCC 700698) protein is Transcriptional regulator MraZ.